The following is a 735-amino-acid chain: Funoran endo-beta-hydrolase (735 aa).

Positions 1-27 are cleaved as a signal peptide; it reads MRVKSVYKKLSVSFILVMLSASQEVNS. E200 acts as the Proton donor in catalysis. The Nucleophile role is filled by E322.

It belongs to the glycosyl hydrolase 86 family.

It carries out the reaction Endohydrolysis of beta-(1-&gt;4)-linkages between beta-D-galactopyranose-6-sulfate and 3,6-anhydro-alpha-L-galactopyranose units in funoran.. The enzyme catalyses Hydrolysis of (1-&gt;4)-beta-D-galactosidic linkages in agarose, giving the tetramer as the predominant product.. With respect to regulation, agarase activity is enhanced in the presence of NaCl. Agarase activity is significantly inhibited by Zn(2+) and slightly activated by several divalent ions including Mg(2+), Cd(2+) and Ca(2+). Its function is as follows. Endohydrolase that cleaves the beta-1,4 glycosidic bond between beta-D-galactopyranose-6-sulfate (G6S) and 3,6-anhydro-alpha-L-galactopyranose (LA) unit of funoran, a polysaccharide produced by red algae of the genus Gloiopeltis. It releases the disaccharide LA-G6S as the predominant end product. Also acts as a random endo-acting beta-agarase, which can hydrolyze agarose tetrasaccharides and hexasaccharides, and produces disaccharides as smallest products. Besides typical agarose oligosaccharides, it can use methylated galactoses. The enzyme exhibits higher catalytic efficiency towards agarose, but binds funoran preferentially. Has no activity on porphyran. This Wenyingzhuangia aestuarii protein is Funoran endo-beta-hydrolase.